Here is a 516-residue protein sequence, read N- to C-terminus: Probable fucosyltransferase 8 (516 aa).

A helical; Signal-anchor for type II membrane protein membrane pass occupies residues 5–25 (ITVVTCLFLLSVMQLSFFNIF). Residues 26–516 (NYQLLDATTN…ITGLKLVDSN (491 aa)) are Lumenal-facing. N-linked (GlcNAc...) asparagine glycans are attached at residues Asn35, Asn116, Asn211, Asn362, and Asn463.

This sequence belongs to the glycosyltransferase 37 family. Expressed in leaves and stems.

It is found in the golgi apparatus. Its subcellular location is the golgi stack membrane. The protein operates within protein modification; protein glycosylation. Its function is as follows. May be involved in cell wall biosynthesis. May act as a fucosyltransferase. The protein is Probable fucosyltransferase 8 (FUT8) of Arabidopsis thaliana (Mouse-ear cress).